We begin with the raw amino-acid sequence, 161 residues long: Large ribosomal subunit protein uL10 (161 aa).

It belongs to the universal ribosomal protein uL10 family. As to quaternary structure, part of the ribosomal stalk of the 50S ribosomal subunit. The N-terminus interacts with L11 and the large rRNA to form the base of the stalk. The C-terminus forms an elongated spine to which L12 dimers bind in a sequential fashion forming a multimeric L10(L12)X complex.

In terms of biological role, forms part of the ribosomal stalk, playing a central role in the interaction of the ribosome with GTP-bound translation factors. The protein is Large ribosomal subunit protein uL10 of Campylobacter curvus (strain 525.92).